Here is a 548-residue protein sequence, read N- to C-terminus: ADP,ATP carrier protein 1 (548 aa).

Transmembrane regions (helical) follow at residues 39 to 59 (RPVF…YSVS) and 75 to 95 (SIPY…VFSI). Residue Asn101 is glycosylated (N-linked (GlcNAc...) asparagine). 8 helical membrane passes run 107–127 (VFSI…TVLM), 149–169 (MVFM…SWTS), 171–191 (LMYL…FFAL), 204–224 (FIPL…FSMK), 239–259 (LFFR…IYLI), 302–322 (LVLA…MVEA), 350–370 (IQLA…PALI), and 374–394 (GFLY…ASVF). N-linked (GlcNAc...) asparagine glycosylation is found at Asn400 and Asn406. A helical transmembrane segment spans residues 410-430 (LGFVSIGENLWLEQLLGAIIV). An N-linked (GlcNAc...) asparagine glycan is attached at Asn488. A helical membrane pass occupies residues 494 to 514 (KAAISSLTIVTVITACWGFAV).

This sequence belongs to the ADP/ATP translocase tlc family.

It is found in the cell membrane. In terms of biological role, ATP transporter involved in the uptake of ATP from the host cell cytoplasm. Provides the microsporidian cell with host ATP in exchange for ADP. This is an obligate exchange system. This energy acquiring activity is an important component of microsporidian parasitism. The polypeptide is ADP,ATP carrier protein 1 (ANC1) (Paranosema grylli (Microsporidian parasite)).